Consider the following 363-residue polypeptide: Ribosomal RNA large subunit methyltransferase M (363 aa).

S-adenosyl-L-methionine-binding positions include serine 194, 227–230 (CPGG), aspartate 246, aspartate 266, and aspartate 284. The active-site Proton acceptor is the lysine 313.

This sequence belongs to the class I-like SAM-binding methyltransferase superfamily. RNA methyltransferase RlmE family. RlmM subfamily. In terms of assembly, monomer.

The protein localises to the cytoplasm. The enzyme catalyses cytidine(2498) in 23S rRNA + S-adenosyl-L-methionine = 2'-O-methylcytidine(2498) in 23S rRNA + S-adenosyl-L-homocysteine + H(+). Catalyzes the 2'-O-methylation at nucleotide C2498 in 23S rRNA. The polypeptide is Ribosomal RNA large subunit methyltransferase M (Haemophilus influenzae (strain ATCC 51907 / DSM 11121 / KW20 / Rd)).